Reading from the N-terminus, the 226-residue chain is ATP synthase subunit a (226 aa).

Helical transmembrane passes span Phe-18–Ala-38, Val-44–Ala-64, Leu-79–Phe-99, Ser-105–Ile-125, Phe-137–Phe-157, Phe-177–Leu-197, and Leu-202–Val-222.

It belongs to the ATPase A chain family. In terms of assembly, F-type ATPases have 2 components, CF(1) - the catalytic core - and CF(0) - the membrane proton channel. CF(1) has five subunits: alpha(3), beta(3), gamma(1), delta(1), epsilon(1). CF(0) has three main subunits: a(1), b(2) and c(9-12). The alpha and beta chains form an alternating ring which encloses part of the gamma chain. CF(1) is attached to CF(0) by a central stalk formed by the gamma and epsilon chains, while a peripheral stalk is formed by the delta and b chains.

The protein resides in the cell inner membrane. Its function is as follows. Key component of the proton channel; it plays a direct role in the translocation of protons across the membrane. This is ATP synthase subunit a from Helicobacter hepaticus (strain ATCC 51449 / 3B1).